We begin with the raw amino-acid sequence, 249 residues long: UPF0758 protein Oant_1909 (249 aa).

The 123-residue stretch at 127–249 (VLGSWNKVIE…HASFRGLGLI (123 aa)) folds into the MPN domain. Zn(2+) is bound by residues histidine 198, histidine 200, and aspartate 211. The short motif at 198–211 (HNHPSGDPTPSRAD) is the JAMM motif element.

The protein belongs to the UPF0758 family.

This is UPF0758 protein Oant_1909 from Brucella anthropi (strain ATCC 49188 / DSM 6882 / CCUG 24695 / JCM 21032 / LMG 3331 / NBRC 15819 / NCTC 12168 / Alc 37) (Ochrobactrum anthropi).